The following is a 187-amino-acid chain: MQKRNPSVQLALNGTPIYLNNILMSVSVKREEKDMSGQKSSTKKSDKGVKAKELSVTGFIPYNRKEWLTQLFNLAEAETGKGEQTKYRVSCTVAEAVNMREVQFSGEVSATEQNGQLGWSISFRLREVNSVAEKKDQRKKKPKVKTQGENAPVAKSAGENSGKLEEQKDERKGIAKDIDDFFGGIDG.

Residues 131–187 (VAEKKDQRKKKPKVKTQGENAPVAKSAGENSGKLEEQKDERKGIAKDIDDFFGGIDG) are disordered. The span at 162–179 (GKLEEQKDERKGIAKDID) shows a compositional bias: basic and acidic residues.

This is an uncharacterized protein from Haemophilus influenzae (Bacteriophage HP1).